The following is a 900-amino-acid chain: DNA polymerase nu (900 aa).

Basic and acidic residues predominate over residues 60 to 75 (LEDRKTQSPEKKDLKS). Disordered regions lie at residues 60–90 (LEDR…LSPQ) and 863–900 (GPPP…SFCL). Over residues 76-90 (LRSQTSRGSAKLSPQ) the composition is skewed to polar residues.

Belongs to the DNA polymerase type-A family. Interacts with FANCD2, FANCI, PCNA, RAD51 and HELQ. In terms of tissue distribution, highly expressed in testis and heart. Weakly expressed in skeletal muscle.

It is found in the nucleus. The catalysed reaction is DNA(n) + a 2'-deoxyribonucleoside 5'-triphosphate = DNA(n+1) + diphosphate. Its activity is regulated as follows. Inhibited by ddTTP. DNA polymerase with very low fidelity that catalyzes considerable misincorporation by inserting dTTP opposite a G template, and dGTP opposite a T template. Is the least accurate of the DNA polymerase A family (i.e. POLG, POLN and POLQ). Can perform accurate translesion DNA synthesis (TLS) past a 5S-thymine glycol. Can perform efficient strand displacement past a nick or a gap and gives rise to an amount of product similar to that on non-damaged template. Has no exonuclease activity. Error-prone DNA polymerase that preferentially misincorporates dT regardless of template sequence. May play a role in TLS during interstrand cross-link (ICL) repair. May be involved in TLS when genomic replication is blocked by extremely large major groove DNA lesions. May function in the bypass of some DNA-protein and DNA-DNA cross-links. May have a role in cellular tolerance to DNA cross-linking agents. Involved in the repair of DNA cross-links and double-strand break (DSB) resistance. Participates in FANCD2-mediated repair. Forms a complex with HELQ helicase that participates in homologous recombination (HR) repair and is essential for cellular protection against DNA cross-links. The protein is DNA polymerase nu (POLN) of Homo sapiens (Human).